The primary structure comprises 91 residues: Non-specific lipid-transfer protein 1 (91 aa).

4 disulfide bridges follow: cysteine 3-cysteine 50, cysteine 13-cysteine 27, cysteine 28-cysteine 73, and cysteine 48-cysteine 87.

This sequence belongs to the plant LTP family.

In terms of biological role, plant non-specific lipid-transfer proteins transfer phospholipids as well as galactolipids across membranes. May play a role in wax or cutin deposition in the cell walls of expanding epidermal cells and certain secretory tissues. The protein is Non-specific lipid-transfer protein 1 of Prunus domestica (Garden plum).